A 496-amino-acid polypeptide reads, in one-letter code: Glycogen synthase (496 aa).

Lysine 15 provides a ligand contact to ADP-alpha-D-glucose.

The protein belongs to the glycosyltransferase 1 family. Bacterial/plant glycogen synthase subfamily.

The catalysed reaction is [(1-&gt;4)-alpha-D-glucosyl](n) + ADP-alpha-D-glucose = [(1-&gt;4)-alpha-D-glucosyl](n+1) + ADP + H(+). It functions in the pathway glycan biosynthesis; glycogen biosynthesis. Functionally, synthesizes alpha-1,4-glucan chains using ADP-glucose. This is Glycogen synthase from Natranaerobius thermophilus (strain ATCC BAA-1301 / DSM 18059 / JW/NM-WN-LF).